The primary structure comprises 1096 residues: Protein EMBRYONIC FLOWER 1 (1096 aa).

Disordered regions lie at residues 155-189 (KARG…EKLN), 274-296 (KTSG…VRGR), 315-348 (GATS…KGKQ), 366-420 (ETSQ…KKPV), 563-612 (LSRV…DIPM), 629-651 (DKEE…KNAL), 1007-1032 (DKEK…KNSS), and 1070-1096 (FKKK…TQNA). Short sequence motifs (nuclear localization signal) lie at residues 170 to 177 (SRKLVSPE) and 281 to 288 (IRKEESAL). Residues 281 to 294 (IRKEESALKKESVR) are compositionally biased toward basic and acidic residues. The span at 315-337 (GATSENASKSCDSDQGNSESTDS) shows a compositional bias: polar residues. The DNA-binding stretch occupies residues 337 to 617 (SGFDRTPFKG…DDIPMEIVEL (281 aa)). Residues 371–381 (GIKEHDADPSK) are compositionally biased toward basic and acidic residues. Residues 382-394 (RSTPAHSLFTGND) are compositionally biased toward polar residues. The span at 572-601 (SGADRKGKTVMVQEHHGAPRSQSHDRKETT) shows a compositional bias: basic and acidic residues. The segment at 866 to 1096 (LDPRLRSTTP…KPVCPPTQNA (231 aa)) is DNA-binding. Residues 1018-1032 (SCNNNASAGPVKNSS) are compositionally biased toward polar residues. A Nuclear localization signal 3 motif is present at residues 1071 to 1078 (KKKPAVCK).

Interacts with MSI1. Expressed in mature embryo, root tips, cotyledons, leaves, stems, shoot apex, and flower clusters, with highest levels in flowers. The presence in the shoot apical meristem (SAM) is required to maintain vegetative development and prevent early flowering.

The protein resides in the nucleus. Its function is as follows. Transcription repressor that regulates phase transition during shoot, flower and seeds development. Controls leaves development, shoot architecture and flowering by delaying both the vegetative to reproductive transition and flower initiation. Participates in polycomb group (PcG) protein complex-mediated (including EMF2) silencing of the flower homeotic genes AGAMOUS (AG), PISTILLATA (PI), and APETALA3 (AP3), as well as of some regulatory genes such as ABSCISIC ACID INSENSITIVE3 (ABI3), LONG VEGETATIVE PHASE1 (LOV1), and FLOWERING LOCUS C (FLC) during vegetative development. Required for histone methylation or for maintaining a stable histone methylation (e.g. H3K27me3) pattern of repressed target genes (including genes involved in salt stress response and flower development); this repression is counteracted by ULT1. Can bind non specifically DNA (both double- and single-stranded) and RNA. The polypeptide is Protein EMBRYONIC FLOWER 1 (Arabidopsis thaliana (Mouse-ear cress)).